The sequence spans 216 residues: 3-keto-L-gulonate-6-phosphate decarboxylase UlaD (216 aa).

D11 contacts substrate. 2 residues coordinate Mg(2+): E33 and D62. R192 is a substrate binding site.

This sequence belongs to the HPS/KGPDC family. KGPDC subfamily. Homodimer. The cofactor is Mg(2+).

It catalyses the reaction 3-dehydro-L-gulonate 6-phosphate + H(+) = L-xylulose 5-phosphate + CO2. It participates in cofactor degradation; L-ascorbate degradation; D-xylulose 5-phosphate from L-ascorbate: step 2/4. In terms of biological role, catalyzes the decarboxylation of 3-keto-L-gulonate-6-P into L-xylulose-5-P. Is involved in the anaerobic L-ascorbate utilization. The chain is 3-keto-L-gulonate-6-phosphate decarboxylase UlaD from Shigella dysenteriae serotype 1 (strain Sd197).